A 555-amino-acid chain; its full sequence is Glutamine--tRNA ligase (555 aa).

The 'HIGH' region motif lies at 34–44 (PEPNGYLHIGH). Residues 35-37 (EPN) and 41-47 (HIGHAKS) each bind ATP. Residues aspartate 67 and tyrosine 212 each contribute to the L-glutamine site. ATP-binding positions include threonine 231, 261 to 262 (RL), and 269 to 271 (MSK). Positions 268 to 272 (IMSKR) match the 'KMSKS' region motif.

The protein belongs to the class-I aminoacyl-tRNA synthetase family. Monomer.

It is found in the cytoplasm. It catalyses the reaction tRNA(Gln) + L-glutamine + ATP = L-glutaminyl-tRNA(Gln) + AMP + diphosphate. The protein is Glutamine--tRNA ligase of Yersinia pseudotuberculosis serotype O:3 (strain YPIII).